The following is a 23-amino-acid chain: Potassium channel toxin alpha-KTx 13.4 (23 aa).

3 cysteine pairs are disulfide-bonded: Cys-2/Cys-15, Cys-5/Cys-20, and Cys-9/Cys-22. The interaction with Ca(2+)-activated K(+) channels stretch occupies residues 13–20 (GKCINGKC). Tyr-23 carries the tyrosine amide modification.

As to expression, expressed by the venom gland.

It localises to the secreted. In terms of biological role, blocks the potassium channel Shaker B. The polypeptide is Potassium channel toxin alpha-KTx 13.4 (Tityus stigmurus (Brazilian scorpion)).